The sequence spans 297 residues: UBX domain-containing protein 1 (297 aa).

Position 2 is an N-acetylalanine (alanine 2). Positions 2–42 constitute a UBA domain; it reads AELTALESLIEMGFPRGRAEKALALTGNQGIEAAMDWLMEH. Residues 38 to 212 are disordered; the sequence is WLMEHEDDPD…QEPPTKREYD (175 aa). Acidic residues predominate over residues 42-52; it reads HEDDPDVDEPL. The interaction with BRCA1 stretch occupies residues 43 to 297; the sequence is EDDPDVDEPL…VLIVAKKCPS (255 aa). 2 stretches are compositionally biased toward basic and acidic residues: residues 86 to 122 and 137 to 177; these read LTEEERQEQTKRMLELVAQKQREREEREEREALEREK and KLQE…ERAQ. Residues 86–172 are a coiled coil; sequence LTEEERQEQT…RVREKIERDK (87 aa). The residue at position 199 (serine 199) is a Phosphoserine. A Phosphoserine; by MAPK12 modification is found at serine 200. A phosphothreonine mark is found at threonine 207 and threonine 229. The 83-residue stretch at 209-291 folds into the UBX domain; sequence REYDQCRIQV…GLVPSAVLIV (83 aa). The residue at position 270 (serine 270) is a Phosphoserine.

Component of a complex required to couple retrotranslocation, ubiquitination and deglycosylation composed of NGLY1, SAKS1, AMFR, VCP and RAD23B. Interacts with HOMER2. Interacts directly with VCP. Interacts with BRCA1 and BARD1; interaction takes place when BRCA1 is not autoubiquitinated bur is strongly enhanced in the presence of autoubiquitinated BRCA1.

Its subcellular location is the cytoplasm. In terms of biological role, ubiquitin-binding protein that interacts with the BRCA1-BARD1 heterodimer, and regulates its activity. Specifically binds 'Lys-6'-linked polyubiquitin chains. Interaction with autoubiquitinated BRCA1, leads to inhibit the E3 ubiquitin-protein ligase activity of the BRCA1-BARD1 heterodimer. Component of a complex required to couple deglycosylation and proteasome-mediated degradation of misfolded proteins in the endoplasmic reticulum that are retrotranslocated in the cytosol. The polypeptide is UBX domain-containing protein 1 (Ubxn1) (Rattus norvegicus (Rat)).